A 308-amino-acid polypeptide reads, in one-letter code: Putative proline iminopeptidase (308 aa).

One can recognise an AB hydrolase-1 domain in the interval 30–290 (KPVLYIHGGP…LYVTNNAGHS (261 aa)). Residue Ser105 is the Nucleophile of the active site. Asp261 is a catalytic residue. His289 (proton donor) is an active-site residue.

The protein belongs to the peptidase S33 family.

The protein localises to the cytoplasm. It carries out the reaction Release of N-terminal proline from a peptide.. In terms of biological role, specifically catalyzes the removal of N-terminal proline residues from peptides. The polypeptide is Putative proline iminopeptidase (pip) (Mycoplasma genitalium (strain ATCC 33530 / DSM 19775 / NCTC 10195 / G37) (Mycoplasmoides genitalium)).